Consider the following 4981-residue polypeptide: Protocadherin Fat 4 (4981 aa).

An N-terminal signal peptide occupies residues 1–38; that stretch reads MDLAPDRATGRPWLPLHTLSVSQLLRVFWLLSLLPGQA. The Extracellular segment spans residues 39–4504; that stretch reads WVHGAEPRQV…PEEISLPLWA (4466 aa). 34 consecutive Cadherin domains span residues 43 to 135, 136 to 250, 251 to 353, 359 to 475, 476 to 582, 584 to 689, 690 to 793, 794 to 893, 894 to 996, 997 to 1100, 1101 to 1210, 1211 to 1315, 1316 to 1420, 1421 to 1529, 1529 to 1629, 1630 to 1740, 1741 to 1841, 1842 to 1944, 1945 to 2051, 2051 to 2154, 2155 to 2259, 2260 to 2364, 2365 to 2466, 2467 to 2567, 2568 to 2669, 2670 to 2773, 2773 to 2872, 2873 to 2983, 2984 to 3089, 3090 to 3194, 3195 to 3298, 3299 to 3404, 3405 to 3510, and 3509 to 3620; these read AEPR…APVF, PDPS…PPVF, GSSH…DPVV, PATS…PPVF, SQQV…KPVF, QPEG…SPVF, YPVQ…PPVF, SQVA…SPHF, LQAI…SPVF, DQLS…RPLF, NSTN…APKF, LKDF…TPSF, PKST…PPSF, PPGD…VPMF, FISQ…GPVF, TQPK…PPVF, PTDM…TPKF, SRPV…PPIF, SLNS…PPTF, FLSP…NPIF, AQAL…VPVF, ELSP…VPTF, ASKA…PPRF, QHHP…FPKV, RAKE…APIF, KEDP…APRF, FSQI…APRF, SRTS…APQF, LKSK…TPEF, SQSH…SPVF, LSDD…VPRF, VSKL…PPIF, TLNI…GPML, and MLTV…VEIF. 2 N-linked (GlcNAc...) asparagine glycosylation sites follow: Asn84 and Asn237. Residues Asn393, Asn416, Asn435, Asn483, Asn551, Asn615, Asn676, Asn721, Asn825, Asn880, Asn946, Asn1085, Asn1101, Asn1104, Asn1225, Asn1296, Asn1389, and Asn1514 are each glycosylated (N-linked (GlcNAc...) asparagine). Residues Asn1828, Asn1899, Asn1967, and Asn2119 are each glycosylated (N-linked (GlcNAc...) asparagine). N-linked (GlcNAc...) asparagine glycans are attached at residues Asn2387 and Asn2430. N-linked (GlcNAc...) asparagine glycosylation is found at Asn2921, Asn2937, Asn3036, Asn3140, Asn3217, Asn3392, and Asn3477. 2 N-linked (GlcNAc...) asparagine glycosylation sites follow: Asn3706 and Asn3758. The 59-residue stretch at 3802-3860 folds into the EGF-like 1 domain; the sequence is DHDSCVHGPCQNGGSCLRRLAVSSVLKSRESLPVIIVANEPLQPFLCKCLPGYAGSWCE. Cystine bridges form between Cys3806–Cys3817, Cys3811–Cys3848, Cys3850–Cys3859, Cys3866–Cys3877, Cys3871–Cys3886, Cys3888–Cys3897, Cys3904–Cys3915, Cys3909–Cys3924, Cys3926–Cys3935, Cys3942–Cys3953, Cys3947–Cys3962, and Cys3964–Cys3973. Residues 3862–3898 form the EGF-like 2; calcium-binding domain; sequence DIDECLPSPCHSGGTCHNLVGGFSCSCPDGFTGRACE. The 37-residue stretch at 3900-3936 folds into the EGF-like 3; calcium-binding domain; the sequence is DINECLQSPCKNGAICQNFPGSFNCVCKTGYTGKMCE. In terms of domain architecture, EGF-like 4 spans 3938–3974; that stretch reads SVNYCECNPCFNGGSCQSGVDSYYCHCPFGVFGKHCE. In terms of domain architecture, Laminin G-like 1 spans 3975–4159; that stretch reads LNSYGFEELS…LAAQGILDQC (185 aa). N-linked (GlcNAc...) asparagine glycosylation is present at Asn4017. 4 cysteine pairs are disulfide-bonded: Cys4133-Cys4159, Cys4166-Cys4177, Cys4171-Cys4186, and Cys4188-Cys4197. Positions 4162-4198 constitute an EGF-like 5 domain; it reads LEGACTRSPCQHGGTCMDYWSWQQCHCKEGLTGKYCE. The region spanning 4217–4398 is the Laminin G-like 2 domain; it reads YHMSQNEKRE…KTDPSVKIGC (182 aa). 2 N-linked (GlcNAc...) asparagine glycosylation sites follow: Asn4267 and Asn4312. 4 disulfides stabilise this stretch: Cys4365–Cys4398, Cys4430–Cys4441, Cys4435–Cys4451, and Cys4453–Cys4462. The EGF-like 6 domain maps to 4426 to 4463; that stretch reads PPGDCASHPCQNGGSCEPGLHSGFTCSCPDSHTGRTCE. Residues 4505-4525 form a helical membrane-spanning segment; sequence VPAIVGSCATVLALLVLSLIL. The Cytoplasmic portion of the chain corresponds to 4526-4981; sequence CNQCRGKKAK…PKDGEAEQYV (456 aa). Disordered regions lie at residues 4534-4584, 4680-4713, 4752-4856, 4869-4911, and 4957-4981; these read AKNP…PDII, QGLR…STFY, RSKS…MEYD, KLSQ…AAPG, and AAAN…EQYV. Over residues 4680–4699 the composition is skewed to polar residues; that stretch reads QGLRTSSLSHSACPTPNPLS. The interval 4706–4795 is necessary and sufficient for interaction with MPDZ; that stretch reads FSKSSTFYRN…GLSIEEVERL (90 aa). Positions 4809-4821 are enriched in basic and acidic residues; that stretch reads DHGRSSSEEDCRR. At Ser4876 the chain carries Phosphoserine. Positions 4971 to 4981 are enriched in basic and acidic residues; sequence VPKDGEAEQYV.

As to quaternary structure, heterophilic interaction with DCHS1; this interaction affects their respective protein levels. Interacts (via cytoplasmic domain) with MPDZ. Forms a complex with PALS1 and MPDZ. Widely expressed. Expressed in fetal brain, infant brain, brain tumor and colorectal cancer.

It is found in the membrane. Functionally, cadherins are calcium-dependent cell adhesion proteins. FAT4 plays a role in the maintenance of planar cell polarity as well as in inhibition of YAP1-mediated neuroprogenitor cell proliferation and differentiation. In Homo sapiens (Human), this protein is Protocadherin Fat 4 (FAT4).